The following is a 408-amino-acid chain: MEEVIERFLKYVKFDTQSDENSNTVPSTDKQLKLGKNLVEELKEIGLSGVSIDDNGYVMAYLPANIEKNVPALGFISHMDTSPDMSGENVNPQFVKNYDGNDIVLNKDKNIVLSPKDFPEILKYKGKTLITTDGNTLLGADDKAGIAEIITAISYISKHPEIKHGKICIGFTPDEEVGRGADYFDVKKFGADVAYTVDGGDFGELEYENFNAASAKITVHGRNVHPGSAKDKMINSISVAEEFMRLMPKEQAPEYTEGYEGFYHIVDFQGSVEETKLQYIIRDFSKNKFEDKKKLMLDAAKFINEKYGRNLVEIEVKDQYYNMKEKIDEVKYVVDIAYKAMEEVEVKPLVRPIRGGTDGARLSFMGLPTPNLFTGGVNFHGKFEYIPTFAMEKAVEVIVKIVELYAEK.

Residue His78 coordinates Zn(2+). Asp80 is an active-site residue. Asp141 serves as a coordination point for Zn(2+). The active-site Proton acceptor is Glu175. Positions 176, 198, and 380 each coordinate Zn(2+).

This sequence belongs to the peptidase M20B family. Requires Zn(2+) as cofactor.

Its subcellular location is the cytoplasm. It catalyses the reaction Release of the N-terminal residue from a tripeptide.. In terms of biological role, cleaves the N-terminal amino acid of tripeptides. This is Peptidase T from Clostridium acetobutylicum (strain ATCC 824 / DSM 792 / JCM 1419 / IAM 19013 / LMG 5710 / NBRC 13948 / NRRL B-527 / VKM B-1787 / 2291 / W).